Here is a 367-residue protein sequence, read N- to C-terminus: Chorismate synthase (367 aa).

NADP(+)-binding residues include Arg-48 and Arg-54. FMN-binding positions include 125 to 127 (RSS), 238 to 239 (NA), Gly-278, 293 to 297 (KPTSS), and Arg-319.

It belongs to the chorismate synthase family. In terms of assembly, homotetramer. FMNH2 serves as cofactor.

The catalysed reaction is 5-O-(1-carboxyvinyl)-3-phosphoshikimate = chorismate + phosphate. It participates in metabolic intermediate biosynthesis; chorismate biosynthesis; chorismate from D-erythrose 4-phosphate and phosphoenolpyruvate: step 7/7. Catalyzes the anti-1,4-elimination of the C-3 phosphate and the C-6 proR hydrogen from 5-enolpyruvylshikimate-3-phosphate (EPSP) to yield chorismate, which is the branch point compound that serves as the starting substrate for the three terminal pathways of aromatic amino acid biosynthesis. This reaction introduces a second double bond into the aromatic ring system. The chain is Chorismate synthase from Xanthomonas campestris pv. campestris (strain 8004).